Here is a 121-residue protein sequence, read N- to C-terminus: Putative inactive aspartokinase 3 HI_1632 (121 aa).

The protein belongs to the aspartokinase family.

The sequence is that of Putative inactive aspartokinase 3 HI_1632 from Haemophilus influenzae (strain ATCC 51907 / DSM 11121 / KW20 / Rd).